We begin with the raw amino-acid sequence, 485 residues long: NADH-quinone oxidoreductase subunit N (485 aa).

Helical transmembrane passes span 8–28 (LIAL…MLSI), 35–55 (FLNA…LWFV), 75–95 (LYTG…YPWL), 105–125 (FYLL…ANHL), 127–147 (ALFL…GYAF), 159–179 (YTIL…LVYA), 203–223 (LLAG…LVPF), 235–255 (PAPV…GVVM), 271–291 (VVLG…ALSQ), 297–317 (LLGY…IALQ), 326–346 (VGVY…VVSL), 374–394 (AVMT…GFIG), 408–430 (WWLV…RVAV), and 455–475 (IVVL…QPLI).

Belongs to the complex I subunit 2 family. In terms of assembly, NDH-1 is composed of 13 different subunits. Subunits NuoA, H, J, K, L, M, N constitute the membrane sector of the complex.

It localises to the cell inner membrane. The catalysed reaction is a quinone + NADH + 5 H(+)(in) = a quinol + NAD(+) + 4 H(+)(out). Its function is as follows. NDH-1 shuttles electrons from NADH, via FMN and iron-sulfur (Fe-S) centers, to quinones in the respiratory chain. The immediate electron acceptor for the enzyme in this species is believed to be ubiquinone. Couples the redox reaction to proton translocation (for every two electrons transferred, four hydrogen ions are translocated across the cytoplasmic membrane), and thus conserves the redox energy in a proton gradient. In Klebsiella pneumoniae (strain 342), this protein is NADH-quinone oxidoreductase subunit N.